The chain runs to 483 residues: MKFELNDKKLDAIKADFELVFIQDKNLKIFNKEKDFFKLNNYKGEGALLDLNNKKLYLELKSLAYEDIRLSLCTAYKTLEKLNIKSVKLPSIIGDCVVRSFASLVEGVLFGAYKFDKYKSEKKTSTLEKFIISNEELNGKKFNKDEAKIGLERGEILANATNFTKNIVNEIPEIYTPLKMAEDAQNLAKENKNIICKIYDEKFLAKEKMNAFLAVNHASVHPPRLIHLSYKAKNAKKRVVFVGKGLTYDSGGLSLKPADFMLTMKADKSGAAAAMGIIKAVAELALDLEVHCILGATENMIGGNAYKPDDVLISREGVSIEVRNTDAEGRLVLADCLSFAQDLKPDLLIDMATLTGACVVGLGEFTSAIMGNNEELQNDFYLSSKKSGEYTTILHFNPHLRELIKSNIADVSNTASSRYGGAITAGLFLDKFIRKEYKDKWLHLDIAGPAYTEKSWGYSSFGAGGAGVRMCVNYLIQILRKAK.

Residues Lys244 and Asp249 each contribute to the Mn(2+) site. Residue Lys256 is part of the active site. 3 residues coordinate Mn(2+): Asp267, Asp326, and Glu328. Arg330 is an active-site residue.

Belongs to the peptidase M17 family. Mn(2+) serves as cofactor.

It localises to the cytoplasm. The enzyme catalyses Release of an N-terminal amino acid, Xaa-|-Yaa-, in which Xaa is preferably Leu, but may be other amino acids including Pro although not Arg or Lys, and Yaa may be Pro. Amino acid amides and methyl esters are also readily hydrolyzed, but rates on arylamides are exceedingly low.. The catalysed reaction is Release of an N-terminal amino acid, preferentially leucine, but not glutamic or aspartic acids.. Functionally, presumably involved in the processing and regular turnover of intracellular proteins. Catalyzes the removal of unsubstituted N-terminal amino acids from various peptides. In Campylobacter jejuni subsp. jejuni serotype O:2 (strain ATCC 700819 / NCTC 11168), this protein is Probable cytosol aminopeptidase.